A 571-amino-acid polypeptide reads, in one-letter code: Urease subunit alpha (571 aa).

In terms of domain architecture, Urease spans 134-571 (GAIDTHIHFI…LPMAQRYFLF (438 aa)). His139, His141, and Lys222 together coordinate Ni(2+). Position 222 is an N6-carboxylysine (Lys222). His224 contacts substrate. Residues His251 and His277 each contribute to the Ni(2+) site. Catalysis depends on His325, which acts as the Proton donor. Asp365 is a binding site for Ni(2+).

It belongs to the metallo-dependent hydrolases superfamily. Urease alpha subunit family. In terms of assembly, heterotrimer of UreA (gamma), UreB (beta) and UreC (alpha) subunits. Three heterotrimers associate to form the active enzyme. Requires Ni cation as cofactor. Post-translationally, carboxylation allows a single lysine to coordinate two nickel ions.

It localises to the cytoplasm. It carries out the reaction urea + 2 H2O + H(+) = hydrogencarbonate + 2 NH4(+). The protein operates within nitrogen metabolism; urea degradation; CO(2) and NH(3) from urea (urease route): step 1/1. This chain is Urease subunit alpha, found in Bordetella bronchiseptica (strain ATCC BAA-588 / NCTC 13252 / RB50) (Alcaligenes bronchisepticus).